Here is a 150-residue protein sequence, read N- to C-terminus: Multiprotein-bridging factor 1 (150 aa).

The interval 32-59 is disordered; that stretch reads LNAARRSGNVVGTEKKYGSTNTKSNPEG. Polar residues predominate over residues 49 to 58; sequence GSTNTKSNPE. One can recognise an HTH cro/C1-type domain in the interval 85 to 139; it reads IQQARQEKKLTQKDLATKINEKPNVINDYEAGRAVPNQQLLGKLERALGVKLRGK. Positions 96–115 form a DNA-binding region, H-T-H motif; it reads QKDLATKINEKPNVINDYEA.

Belongs to the MBF1 family.

Its function is as follows. Transcriptional coactivator that stimulates GCN4-dependent transcriptional activity by bridging the DNA-binding region of GCN4 and TBP (SPT15), thereby recruiting TBP to GCN4-bound promoters. Involved in induction of the ribosome quality control (RQC) pathway; a pathway that degrades nascent peptide chains during problematic translation. Required to prevent stalled ribosomes from frameshifting. In Debaryomyces hansenii (strain ATCC 36239 / CBS 767 / BCRC 21394 / JCM 1990 / NBRC 0083 / IGC 2968) (Yeast), this protein is Multiprotein-bridging factor 1 (MBF1).